A 1159-amino-acid chain; its full sequence is Reverse gyrase 2 (1159 aa).

The segment at 1-40 (MALELIERGCPNCGGVISSDRLEKGLPCSKCLPKPTEEKV) adopts an RG N-terminal-type zinc-finger fold. The Zn(2+) site is built by cysteine 10, cysteine 13, cysteine 28, and cysteine 31. ATP is bound by residues glutamine 82 and 99-106 (APTGVGKT). In terms of domain architecture, Helicase ATP-binding spans 86–275 (AKRVFMNQSF…LFRNLLGFDV (190 aa)). The DEAD box motif lies at 196–199 (DDID). The interval 583–1159 (DLFKTTLVIV…LLKEEKAFKK (577 aa)) is topoisomerase I. Residues 587–743 (TTLVIVESPN…NIKRAEFHEV (157 aa)) enclose the Toprim domain. Mg(2+) contacts are provided by glutamate 593 and aspartate 712. The Topo IA-type catalytic domain occupies 759 to 1152 (DLNLVKAQLV…EVHRIKVLLK (394 aa)). Tyrosine 902 serves as the catalytic O-(5'-phospho-DNA)-tyrosine intermediate.

The protein in the N-terminal section; belongs to the DEAD box helicase family. DDVD subfamily. It in the C-terminal section; belongs to the type IA topoisomerase family. In terms of assembly, monomer. Zn(2+) is required as a cofactor. Requires Mg(2+) as cofactor.

Its subcellular location is the cytoplasm. It catalyses the reaction ATP + H2O = ADP + phosphate + H(+). Functionally, modifies the topological state of DNA by introducing positive supercoils in an ATP-dependent process, increasing the linking number in steps of +1. Binds to single-stranded DNA, transiently cleaves and then rejoins the ends, introducing a positive supercoil in the process. The scissile phosphodiester is attacked by the catalytic tyrosine of the enzyme, resulting in the formation of a DNA-(5'-phosphotyrosyl)-enzyme intermediate. Probably involved in rewinding DNA strands in regions of the chromosome that have opened up to allow replication, transcription, DNA repair and/or for DNA protection. The protein is Reverse gyrase 2 of Aquifex aeolicus (strain VF5).